The sequence spans 381 residues: DNA replication and repair protein RecF (381 aa).

Residue 30 to 37 (GENAQGKT) coordinates ATP.

This sequence belongs to the RecF family.

The protein resides in the cytoplasm. Functionally, the RecF protein is involved in DNA metabolism; it is required for DNA replication and normal SOS inducibility. RecF binds preferentially to single-stranded, linear DNA. It also seems to bind ATP. In Lactobacillus delbrueckii subsp. bulgaricus (strain ATCC BAA-365 / Lb-18), this protein is DNA replication and repair protein RecF.